An 84-amino-acid polypeptide reads, in one-letter code: Small ribosomal subunit protein uS17 (84 aa).

It belongs to the universal ribosomal protein uS17 family. As to quaternary structure, part of the 30S ribosomal subunit.

One of the primary rRNA binding proteins, it binds specifically to the 5'-end of 16S ribosomal RNA. The sequence is that of Small ribosomal subunit protein uS17 from Vibrio vulnificus (strain CMCP6).